A 131-amino-acid polypeptide reads, in one-letter code: Ribosome-binding factor A (131 aa).

The protein belongs to the RbfA family. Monomer. Binds 30S ribosomal subunits, but not 50S ribosomal subunits or 70S ribosomes.

It localises to the cytoplasm. Functionally, one of several proteins that assist in the late maturation steps of the functional core of the 30S ribosomal subunit. Associates with free 30S ribosomal subunits (but not with 30S subunits that are part of 70S ribosomes or polysomes). Required for efficient processing of 16S rRNA. May interact with the 5'-terminal helix region of 16S rRNA. This is Ribosome-binding factor A from Christiangramia forsetii (strain DSM 17595 / CGMCC 1.15422 / KT0803) (Gramella forsetii).